A 649-amino-acid chain; its full sequence is Acetyl-coenzyme A synthetase (649 aa).

CoA is bound by residues 191–194 (RAGR), threonine 311, and asparagine 335. ATP is bound by residues 387–389 (GEP), 411–416 (DTWWQT), aspartate 500, and arginine 515. Serine 523 contributes to the CoA binding site. Arginine 526 provides a ligand contact to ATP. Mg(2+)-binding residues include valine 537, phenylalanine 539, and isoleucine 542. Arginine 584 provides a ligand contact to CoA. Lysine 609 is modified (N6-acetyllysine).

Belongs to the ATP-dependent AMP-binding enzyme family. The cofactor is Mg(2+). Post-translationally, acetylated. Deacetylation by the SIR2-homolog deacetylase activates the enzyme.

The enzyme catalyses acetate + ATP + CoA = acetyl-CoA + AMP + diphosphate. In terms of biological role, catalyzes the conversion of acetate into acetyl-CoA (AcCoA), an essential intermediate at the junction of anabolic and catabolic pathways. AcsA undergoes a two-step reaction. In the first half reaction, AcsA combines acetate with ATP to form acetyl-adenylate (AcAMP) intermediate. In the second half reaction, it can then transfer the acetyl group from AcAMP to the sulfhydryl group of CoA, forming the product AcCoA. The chain is Acetyl-coenzyme A synthetase from Photobacterium profundum (strain SS9).